Reading from the N-terminus, the 78-residue chain is Small ribosomal subunit protein bS18 (78 aa).

This sequence belongs to the bacterial ribosomal protein bS18 family. As to quaternary structure, part of the 30S ribosomal subunit. Forms a tight heterodimer with protein bS6.

Binds as a heterodimer with protein bS6 to the central domain of the 16S rRNA, where it helps stabilize the platform of the 30S subunit. This chain is Small ribosomal subunit protein bS18, found in Nocardioides sp. (strain ATCC BAA-499 / JS614).